The following is a 731-amino-acid chain: Ribonuclease R (731 aa).

The region spanning 260–589 (RTDLRHFPFF…LHRVIKYLLF (330 aa)) is the RNB domain. One can recognise an S1 motif domain in the interval 647–728 (GCILNGVISN…NEKKIELSLY (82 aa)).

This sequence belongs to the RNR ribonuclease family. RNase R subfamily. In terms of assembly, monomer.

It localises to the cytoplasm. It catalyses the reaction Exonucleolytic cleavage in the 3'- to 5'-direction to yield nucleoside 5'-phosphates.. Its function is as follows. 3'-5' exoribonuclease that releases 5'-nucleoside monophosphates and is involved in maturation of structured RNAs. This Buchnera aphidicola subsp. Acyrthosiphon pisum (strain APS) (Acyrthosiphon pisum symbiotic bacterium) protein is Ribonuclease R.